The following is a 273-amino-acid chain: Octanoyltransferase LipM (273 aa).

The BPL/LPL catalytic domain maps to Gly-33–Phe-244. Catalysis depends on Cys-146, which acts as the Acyl-thioester intermediate.

Belongs to the octanoyltransferase LipM family. In terms of assembly, monomer.

The enzyme catalyses octanoyl-[ACP] + L-lysyl-[protein] = N(6)-octanoyl-L-lysyl-[protein] + holo-[ACP] + H(+). Its pathway is protein modification; protein lipoylation via endogenous pathway; protein N(6)-(lipoyl)lysine from octanoyl-[acyl-carrier-protein]. Catalyzes the transfer of endogenously produced octanoic acid from octanoyl-acyl-carrier-protein onto the lipoyl domain of GcvH, an intermediate carrier during protein lipoylation. The chain is Octanoyltransferase LipM from Moorella thermoacetica (strain ATCC 39073 / JCM 9320).